We begin with the raw amino-acid sequence, 522 residues long: MWFIVYILLALPIMLFVFLSCEWPKRNDAEQIEWSSGVPFLGNAHQMGKTPAEILNTFFEFWHKYNKDNFRIWIGYYANILVSNPKHLEVIMNSTTLIEKLDIYDMLHPWLGEGLLTSKGSKWHKHRKMITPTFHFNILQDFHQVMNENSAKFIKRLKEVSAGDNIIDFQDETHYLTLDAICDTAMGVTINAIEKRDTVDVVKAFKDMCHIINMRAFRPLQRSDFLYRFSPEYATYAKTLKTLKDFTNDIIAKRIKVHRTAAAKTNQEGSEFSRKKMLPDTLLSATIDGRPLNQQEIYEEVSTFMFEGHDTTTSGVAFAGYILSRFPEEQRKLYEEQQAVMGNELNRDATFQEISAMKYLDLFIKEAQRVYPSVPFIGRYTDKDYNIHGTIMPKGTTLNLGIIVLGYDDRVFEEPHRFYPERFEKQKPGPFEYVPFSAGPRNCIGQKFALLELKTVISKLVRTFEVLPAVDELVSKDGNLNTYVGLPKEEKERKERMGYKYDPILSAVLTLKSENGLHLRLR.

Residues glutamate 307 and cysteine 443 each contribute to the heme site.

It belongs to the cytochrome P450 family. The cofactor is heme.

It is found in the mitochondrion. Its function is as follows. Probably involved in steroid hormones biosynthesis. The sequence is that of Cytochrome P450 4e5, mitochondrial (Cyp4e5) from Drosophila mettleri (Fruit fly).